The sequence spans 688 residues: Elongation factor G (688 aa).

The region spanning 8–282 (EKTRNIGIMA…AIIDYLPSPM (275 aa)) is the tr-type G domain. GTP contacts are provided by residues 17–24 (AHIDAGKT), 81–85 (DTPGH), and 135–138 (NKMD).

The protein belongs to the TRAFAC class translation factor GTPase superfamily. Classic translation factor GTPase family. EF-G/EF-2 subfamily.

The protein resides in the cytoplasm. Catalyzes the GTP-dependent ribosomal translocation step during translation elongation. During this step, the ribosome changes from the pre-translocational (PRE) to the post-translocational (POST) state as the newly formed A-site-bound peptidyl-tRNA and P-site-bound deacylated tRNA move to the P and E sites, respectively. Catalyzes the coordinated movement of the two tRNA molecules, the mRNA and conformational changes in the ribosome. This Apple proliferation phytoplasma protein is Elongation factor G (fusA).